The primary structure comprises 100 residues: Small ribosomal subunit protein uS14c (100 aa).

This sequence belongs to the universal ribosomal protein uS14 family. Part of the 30S ribosomal subunit.

It localises to the plastid. Its subcellular location is the chloroplast. In terms of biological role, binds 16S rRNA, required for the assembly of 30S particles. This is Small ribosomal subunit protein uS14c from Pisum sativum (Garden pea).